Reading from the N-terminus, the 301-residue chain is Ribonuclease Z (301 aa).

Residues H63, H65, D67, H68, H141, D204, and H262 each contribute to the Zn(2+) site. The Proton acceptor role is filled by D67.

Belongs to the RNase Z family. As to quaternary structure, homodimer. Requires Zn(2+) as cofactor.

It catalyses the reaction Endonucleolytic cleavage of RNA, removing extra 3' nucleotides from tRNA precursor, generating 3' termini of tRNAs. A 3'-hydroxy group is left at the tRNA terminus and a 5'-phosphoryl group is left at the trailer molecule.. Functionally, zinc phosphodiesterase, which displays some tRNA 3'-processing endonuclease activity. Probably involved in tRNA maturation, by removing a 3'-trailer from precursor tRNA. This Streptomyces coelicolor (strain ATCC BAA-471 / A3(2) / M145) protein is Ribonuclease Z.